We begin with the raw amino-acid sequence, 306 residues long: MNQYKNFIMQFEDIVGNNNVLIDEPMKKHTSFKVGGPADLLITPTTLEQVKDSIILCRNNSIPYYIIGNGSNLLVRDGGIRGVVIKFLKLGDIKVEGDRVIAQSGAPLTNICNEALKSNLGGLEFACGIPGSVGGAVTMNAGAYNGEISQVIESAKVIDKDGNVFLLNKEQLDLGYRMSAIQKYHYIVLEVTFKLHNSEYDTIKNRIMDLNRRRIEKQPLEYPSAGSTFKRPEGHFAAKLIEDTGLKGESIGGAQVSEKHSGFIINKGGATAGDILNLIEFVQNKVMEKFQVDLHTEVRIIGEENN.

An FAD-binding PCMH-type domain is found at 34 to 198 (VGGPADLLIT…LEVTFKLHNS (165 aa)). R177 is a catalytic residue. Catalysis depends on S227, which acts as the Proton donor. The active site involves E297.

It belongs to the MurB family. The cofactor is FAD.

It is found in the cytoplasm. The enzyme catalyses UDP-N-acetyl-alpha-D-muramate + NADP(+) = UDP-N-acetyl-3-O-(1-carboxyvinyl)-alpha-D-glucosamine + NADPH + H(+). It functions in the pathway cell wall biogenesis; peptidoglycan biosynthesis. Functionally, cell wall formation. The sequence is that of UDP-N-acetylenolpyruvoylglucosamine reductase from Clostridium botulinum (strain Okra / Type B1).